We begin with the raw amino-acid sequence, 90 residues long: Potassium channel toxin BmTXK-beta (90 aa).

Residues 1 to 22 form the signal peptide; that stretch reads MMKQQFFLFLAVIVMISSVIEA. The propeptide occupies 23 to 29; sequence GRGKEIM. A BetaSPN-type CS-alpha/beta domain is found at 55–90; the sequence is EYACPVIEKWCEDHCAAKKAIGKCEDTECKCLKLRK. 3 disulfide bridges follow: cysteine 58/cysteine 78, cysteine 65/cysteine 83, and cysteine 69/cysteine 85.

The protein belongs to the long chain scorpion toxin family. Class 2 subfamily. As to expression, expressed by the venom gland.

The protein resides in the secreted. This recombinant peptide reversibly and dose-dependently inhibits the transient outward potassium current (I(To)) of rabbit atrial myocyte and prolongs the action potential duration of rabbit atrial myocyte without affecting the action potential amplitude. Thus, the voltage-gated potassium channels Kv4.1/KCND1, Kv4.2/KCND2, Kv4.3/KCND3 may be the target of this toxin. The protein is Potassium channel toxin BmTXK-beta of Olivierus martensii (Manchurian scorpion).